The sequence spans 358 residues: Peptide chain release factor 1 (358 aa).

Glutamine 237 is modified (N5-methylglutamine).

Belongs to the prokaryotic/mitochondrial release factor family. In terms of processing, methylated by PrmC. Methylation increases the termination efficiency of RF1.

It localises to the cytoplasm. Functionally, peptide chain release factor 1 directs the termination of translation in response to the peptide chain termination codons UAG and UAA. This chain is Peptide chain release factor 1, found in Streptomyces avermitilis (strain ATCC 31267 / DSM 46492 / JCM 5070 / NBRC 14893 / NCIMB 12804 / NRRL 8165 / MA-4680).